Here is a 176-residue protein sequence, read N- to C-terminus: Tubulin polymerization-promoting protein family member 3 (176 aa).

Ala-2 carries the post-translational modification N-acetylalanine. The tract at residues 132-152 (TGSHKERFDESGKGKGIAGRQ) is disordered. Residues 134 to 144 (SHKERFDESGK) are compositionally biased toward basic and acidic residues.

Belongs to the TPPP family. In terms of tissue distribution, expressed in endometrium during the mid-secretory phase (LH + 7) (at protein level).

The protein resides in the cytoplasm. The protein localises to the cytoskeleton. Its function is as follows. Regulator of microtubule dynamic that has microtubule bundling activity. Required for embryo implantation; possibly by regulating beta-catenin. Also required for decidualization via regulation of beta-catenin. This chain is Tubulin polymerization-promoting protein family member 3, found in Homo sapiens (Human).